The following is a 177-amino-acid chain: Large ribosomal subunit protein uL6 (177 aa).

This sequence belongs to the universal ribosomal protein uL6 family. In terms of assembly, part of the 50S ribosomal subunit.

Functionally, this protein binds to the 23S rRNA, and is important in its secondary structure. It is located near the subunit interface in the base of the L7/L12 stalk, and near the tRNA binding site of the peptidyltransferase center. This chain is Large ribosomal subunit protein uL6, found in Sinorhizobium fredii (strain NBRC 101917 / NGR234).